Consider the following 335-residue polypeptide: Succinylglutamate desuccinylase (335 aa).

Zn(2+)-binding residues include H59, E62, and H151. E215 is an active-site residue.

This sequence belongs to the AspA/AstE family. Succinylglutamate desuccinylase subfamily. Zn(2+) serves as cofactor.

It catalyses the reaction N-succinyl-L-glutamate + H2O = L-glutamate + succinate. It participates in amino-acid degradation; L-arginine degradation via AST pathway; L-glutamate and succinate from L-arginine: step 5/5. In terms of biological role, transforms N(2)-succinylglutamate into succinate and glutamate. This Pseudomonas putida (strain GB-1) protein is Succinylglutamate desuccinylase.